A 115-amino-acid chain; its full sequence is Histone H2A-Bbd type 1 (115 aa).

A disordered region spans residues 1–21 (MPRRRRRRGSSGAGGRGRTCS). The segment at 87–115 (LLDMVVHNDRLLSTLFNTTTISQVAPGED) is docking domain.

Belongs to the histone H2A family. The nucleosome is a histone octamer containing two molecules each of H2A, H2B, H3 and H4 assembled in one H3-H4 heterotetramer and two H2A-H2B heterodimers. May be incorporated into a proportion of nucleosomes, replacing one or more H2A molecules. Present in mature sperm.

It localises to the nucleus. Its subcellular location is the chromosome. In terms of biological role, atypical histone H2A which can replace conventional H2A in some nucleosomes and is associated with active transcription and mRNA processing. Nucleosomes wrap and compact DNA into chromatin, limiting DNA accessibility to the cellular machineries which require DNA as a template. Histones thereby play a central role in transcription regulation, DNA repair, DNA replication and chromosomal stability. Nucleosomes containing this histone are less rigid and organize less DNA than canonical nucleosomes in vivo. They are enriched in actively transcribed genes and associate with the elongating form of RNA polymerase. They associate with spliceosome components and are required for mRNA splicing. In Homo sapiens (Human), this protein is Histone H2A-Bbd type 1.